The following is a 622-amino-acid chain: Palmitoyltransferase pfa3 (622 aa).

Residues 1–38 lie on the Cytoplasmic side of the membrane; the sequence is MDATPYTTSSTSTALDSPSSLSATMARRWARKLERYCC. A helical membrane pass occupies residues 39 to 59; it reads TCVTYFPLAFVYSMTSWAAYV. Over 60–76 the chain is Vacuolar; sequence DVSLSTTPSRVTWLGHS. Residues 77–97 traverse the membrane as a helical segment; that stretch reads YGFIAVVLYLLANWCYTYAVF. Residues 98-175 lie on the Cytoplasmic side of the membrane; that stretch reads TSPGSTTNEY…ATCVGLRNHK (78 aa). The DHHC domain occupies 132 to 182; that stretch reads RFCKKCQARKPDRAHHCSTCRRCVLKMDHHCPWLATCVGLRNHKAFLLFLI. A helical membrane pass occupies residues 176-196; it reads AFLLFLIYTSVFCWVSFAGSA. Residues 197 to 217 are Vacuolar-facing; the sequence is SWVWEEIMSNTTYVETLMPVN. Residues 218–238 form a helical membrane-spanning segment; the sequence is YIMLSVISGIIGIVLSAFCGW. At 239 to 622 the chain is on the cytoplasmic side; sequence HIYLASRGQT…EGRSNDDGVD (384 aa). 3 disordered regions span residues 298–334, 419–507, and 533–622; these read PGVTRPEEGEEMRRMTTPSGSSQRNDLASQHNPELQA, REEQ…YADD, and DDVL…DGVD. Over residues 302-311 the composition is skewed to basic and acidic residues; sequence RPEEGEEMRR. The span at 313-330 shows a compositional bias: polar residues; sequence TTPSGSSQRNDLASQHNP. Residues 419-428 are compositionally biased toward basic and acidic residues; that stretch reads REEQRQRERQ. Polar residues predominate over residues 443–455; it reads YTPTWTPPNQQHP. Positions 466 to 488 are enriched in low complexity; sequence PSSQPQTQRNSNSSSPSFTPSRR. The segment covering 533–547 has biased composition (acidic residues); that stretch reads DDVLNDDDDDDEDYF. The span at 610–622 shows a compositional bias: basic and acidic residues; the sequence is NGEEGRSNDDGVD.

It belongs to the DHHC palmitoyltransferase family. PFA3 subfamily. Post-translationally, autopalmitoylated.

It localises to the vacuole membrane. The catalysed reaction is L-cysteinyl-[protein] + hexadecanoyl-CoA = S-hexadecanoyl-L-cysteinyl-[protein] + CoA. Functionally, palmitoyltransferase specific for vac8. Palmitoylates vac8 at one or more of its N-terminal cysteine residues, which is required for its proper membrane localization. The polypeptide is Palmitoyltransferase pfa3 (ptr-3) (Neurospora crassa (strain ATCC 24698 / 74-OR23-1A / CBS 708.71 / DSM 1257 / FGSC 987)).